We begin with the raw amino-acid sequence, 182 residues long: ADP-ribosylation factor-like protein 11 (182 aa).

G2 is lipidated: N-myristoyl glycine. GTP contacts are provided by residues 19 to 26 (GLDSAGKT), 63 to 67 (DVGGQ), and 122 to 125 (NKQE).

It belongs to the small GTPase superfamily. Arf family.

Its function is as follows. May play a role in apoptosis. May act as a tumor suppressor. The sequence is that of ADP-ribosylation factor-like protein 11 (ARL11) from Bos taurus (Bovine).